The primary structure comprises 242 residues: Ribonuclease PH (242 aa).

Phosphate is bound by residues R86 and 124–126; that span reads GTR.

Belongs to the RNase PH family. As to quaternary structure, homohexameric ring arranged as a trimer of dimers.

The enzyme catalyses tRNA(n+1) + phosphate = tRNA(n) + a ribonucleoside 5'-diphosphate. In terms of biological role, phosphorolytic 3'-5' exoribonuclease that plays an important role in tRNA 3'-end maturation. Removes nucleotide residues following the 3'-CCA terminus of tRNAs; can also add nucleotides to the ends of RNA molecules by using nucleoside diphosphates as substrates, but this may not be physiologically important. Probably plays a role in initiation of 16S rRNA degradation (leading to ribosome degradation) during starvation. The chain is Ribonuclease PH from Bacillus pumilus (strain SAFR-032).